Reading from the N-terminus, the 92-residue chain is Small ribosomal subunit protein bS20 (92 aa).

The span at 1 to 21 shows a compositional bias: basic and acidic residues; it reads MPLHKSAEKRLRQAARRNERN. Disordered stretches follow at residues 1-26 and 73-92; these read MPLH…ARKK and ASRK…PTAS. Over residues 82-92 the composition is skewed to polar residues; that stretch reads KALNNYTPTAS.

The protein belongs to the bacterial ribosomal protein bS20 family.

Functionally, binds directly to 16S ribosomal RNA. In Chlorobaculum tepidum (strain ATCC 49652 / DSM 12025 / NBRC 103806 / TLS) (Chlorobium tepidum), this protein is Small ribosomal subunit protein bS20.